The sequence spans 189 residues: Phosphoheptose isomerase (189 aa).

Positions 34 to 189 constitute an SIS domain; sequence VADTLKNGKK…CQAVDEAFRG (156 aa). Substrate is bound at residue 49–51; the sequence is NGG. Residues His58 and Glu62 each contribute to the Zn(2+) site. Substrate-binding positions include Glu62, 91-92, 117-119, Ser122, and Gln169; these read ND and STS. 2 residues coordinate Zn(2+): Gln169 and His177.

This sequence belongs to the SIS family. GmhA subfamily. Homotetramer. It depends on Zn(2+) as a cofactor.

The protein localises to the cytoplasm. It carries out the reaction 2 D-sedoheptulose 7-phosphate = D-glycero-alpha-D-manno-heptose 7-phosphate + D-glycero-beta-D-manno-heptose 7-phosphate. It functions in the pathway carbohydrate biosynthesis; D-glycero-D-manno-heptose 7-phosphate biosynthesis; D-glycero-alpha-D-manno-heptose 7-phosphate and D-glycero-beta-D-manno-heptose 7-phosphate from sedoheptulose 7-phosphate: step 1/1. In terms of biological role, catalyzes the isomerization of sedoheptulose 7-phosphate in D-glycero-D-manno-heptose 7-phosphate. The sequence is that of Phosphoheptose isomerase from Campylobacter concisus (strain 13826).